The sequence spans 281 residues: MAGLVYPQYPVFPGYRQPYRQLPPFYKPKQPYWKPPYKGVPGPMKPTNPLDCLDGYKWAQLKALLSQLGPEFGLGRRFTKEVGVQVNPRVDACIQCSLGPRTLKNCKGGPFLFHAVPGQHAGLGIIAPVRFPRTTAVYSRLSDRRLFTLPTPTYGGKKEGGTQMDPVEEDLLLKRPTFQFLEQKYGFFQCKDCQIRWESAYVWCVSGTNKVYFKQFCHKCQKGHNPYYVESIECKRCKKAWCSCPERRHIDLKRPHCQDLCGRCKGQRLSCDKTFSFKYII.

The 3CxxC-type zinc finger occupies 183-267 (QKYGFFQCKD…QDLCGRCKGQ (85 aa)).

The protein belongs to the ZAR1 family. Component of a cytoplasmic ribonucleoprotein complex together with eif4enif1/4E-T and cpeb1. Expressed in oocytes.

It is found in the cytoplasm. It localises to the cytoplasmic ribonucleoprotein granule. Its function is as follows. mRNA-binding protein required for maternal mRNA storage, translation and degradation during oocyte maturation. Controls timing of meiosis during oogenesis. Probably promotes formation of some phase-separated membraneless compartment that stores maternal mRNAs in oocytes: acts by undergoing liquid-liquid phase separation upon binding to maternal mRNAs. Binds to the 3'-UTR of maternal mRNAs, inhibiting their translation. The sequence is that of Protein ZAR1-like 1.S from Xenopus laevis (African clawed frog).